The primary structure comprises 218 residues: Small ribosomal subunit protein uS3c (218 aa).

The KH type-2 domain occupies 47–118 (VQKNIRISSG…KLNIAITRIS (72 aa)).

This sequence belongs to the universal ribosomal protein uS3 family. Part of the 30S ribosomal subunit.

Its subcellular location is the plastid. The protein localises to the chloroplast. The chain is Small ribosomal subunit protein uS3c (rps3) from Crucihimalaya wallichii (Rock-cress).